The chain runs to 380 residues: Cytochrome b (380 aa).

The next 4 membrane-spanning stretches (helical) occupy residues 34-54 (FGSL…LLAM), 78-99 (WLIR…FLHI), 114-134 (WNTG…GYVL), and 179-199 (FFAL…THLM). Heme b contacts are provided by histidine 84 and histidine 98. Heme b-binding residues include histidine 183 and histidine 197. An a ubiquinone-binding site is contributed by histidine 202. Transmembrane regions (helical) follow at residues 227-247 (LKDI…ALFS), 289-309 (LGGV…PFLH), 321-341 (LSQT…WVGS), and 348-368 (FIII…ILFP).

The protein belongs to the cytochrome b family. As to quaternary structure, the cytochrome bc1 complex contains 11 subunits: 3 respiratory subunits (MT-CYB, CYC1 and UQCRFS1), 2 core proteins (UQCRC1 and UQCRC2) and 6 low-molecular weight proteins (UQCRH/QCR6, UQCRB/QCR7, UQCRQ/QCR8, UQCR10/QCR9, UQCR11/QCR10 and a cleavage product of UQCRFS1). This cytochrome bc1 complex then forms a dimer. It depends on heme b as a cofactor.

It localises to the mitochondrion inner membrane. Component of the ubiquinol-cytochrome c reductase complex (complex III or cytochrome b-c1 complex) that is part of the mitochondrial respiratory chain. The b-c1 complex mediates electron transfer from ubiquinol to cytochrome c. Contributes to the generation of a proton gradient across the mitochondrial membrane that is then used for ATP synthesis. The sequence is that of Cytochrome b (MT-CYB) from Tragopan satyra (Satyr tragopan).